The following is a 576-amino-acid chain: Vacuolar protein sorting-associated protein vps5 (576 aa).

Disordered stretches follow at residues 1-60 and 156-198; these read MLGH…PRKR and DAAS…APQS. A Phosphothreonine modification is found at T55. Positions 156–169 are enriched in polar residues; sequence DAASSSAPNFTHTV. The segment covering 170–181 has biased composition (low complexity); the sequence is SSASSQKQGSTS. Residues 200–317 enclose the PX domain; the sequence is TPFYIQVHDP…KLFLEAETFD (118 aa). R244, K270, and R284 together coordinate a 1,2-diacyl-sn-glycero-3-phospho-(1D-myo-inositol-3-phosphate). S332 bears the Phosphoserine mark.

It belongs to the sorting nexin family. As to quaternary structure, component of the retromer complex which consists of vps29, vps26, vps35, vps5 and vps17.

Its subcellular location is the cytoplasm. It is found in the golgi apparatus. The protein resides in the membrane. Functionally, required for efficient sporulation target of PtdIns(3)P in vesicle transport required for onset of the forespore membrane formation. In terms of biological role, plays a role in vesicular protein sorting. Required for the endosome-to-Golgi retrieval of the vacuolar protein sorting receptor pep1/vps10. Component of the membrane-associated retromer complex which is essential in endosome-to-Golgi retrograde transport. The vps29-vps26-vps35 subcomplex may be involved in cargo selection. The chain is Vacuolar protein sorting-associated protein vps5 (vps5) from Schizosaccharomyces pombe (strain 972 / ATCC 24843) (Fission yeast).